The primary structure comprises 82 residues: Beta-defensin 113 (82 aa).

Positions 1–16 (MKILCIFLTFFFTVSC) are cleaved as a signal peptide. 3 cysteine pairs are disulfide-bonded: Cys35/Cys61, Cys42/Cys56, and Cys46/Cys62.

It belongs to the beta-defensin family.

The protein resides in the secreted. In terms of biological role, has antibacterial activity. In Pan troglodytes (Chimpanzee), this protein is Beta-defensin 113 (DEFB113).